The primary structure comprises 397 residues: Glia-derived nexin (397 aa).

An N-terminal signal peptide occupies residues 1–19 (MNWHFPFFILTTVTLYSVH). An N-linked (GlcNAc...) asparagine glycan is attached at N159.

It belongs to the serpin family. In terms of tissue distribution, most abundant in seminal vesicles.

The protein localises to the secreted. It is found in the extracellular space. Serine protease inhibitor with activity toward thrombin, trypsin, and urokinase. Promotes neurite extension by inhibiting thrombin. Binds heparin. In Mus musculus (Mouse), this protein is Glia-derived nexin (Serpine2).